A 266-amino-acid chain; its full sequence is Norfluorocurarine synthase 1 (266 aa).

Residues 11-121 (HFVLVHGAGH…VMPDAVHPPS (111 aa)) form the AB hydrolase-1 domain. Residues Ser-86, Asp-216, and His-244 contribute to the active site.

Belongs to the AB hydrolase superfamily. Homodimer. In terms of tissue distribution, mainly expressed in roots.

The enzyme catalyses 17-dehydropreakuammicine + H2O = norfluorocurarine + methanol + CO2. The protein operates within alkaloid biosynthesis. Functionally, hydrolase involved in the biosynthesis of curare monoterpene indole alkaloids (MIAs), natural products such as strychnine, a neurotoxic compound used as a pesticide to control rodents, and its pharmacologically active derivatives, including brucine, used to regulate blood pressure. Curare alkaloids act as animal glycine receptor antagonists. Catalyzes the conversion of dehydropreakuammicine to norfluorocurarine. In Strychnos nux-vomica (Poison nut), this protein is Norfluorocurarine synthase 1.